A 273-amino-acid polypeptide reads, in one-letter code: Undecaprenyl-diphosphatase (273 aa).

A run of 7 helical transmembrane segments spans residues 6-26 (SLLI…LPVS), 45-65 (AKTF…VMFW), 90-110 (LTLI…LLFH), 116-136 (LFNP…LIAA), 190-210 (YAAS…ATAL), 222-242 (GDIS…LIAI), and 252-272 (ISFI…YVVF).

It belongs to the UppP family.

It is found in the cell inner membrane. The enzyme catalyses di-trans,octa-cis-undecaprenyl diphosphate + H2O = di-trans,octa-cis-undecaprenyl phosphate + phosphate + H(+). In terms of biological role, catalyzes the dephosphorylation of undecaprenyl diphosphate (UPP). Confers resistance to bacitracin. The protein is Undecaprenyl-diphosphatase of Shigella sonnei (strain Ss046).